The primary structure comprises 309 residues: Dihydroorotate dehydrogenase B (NAD(+)), catalytic subunit (309 aa).

FMN is bound by residues S21 and 45 to 46; that span reads KA. Substrate is bound by residues K45 and 69 to 73; that span reads NAIGL. The FMN site is built by N99 and N127. N127 contacts substrate. C130 acts as the Nucleophile in catalysis. 2 residues coordinate FMN: K165 and I191. 192–193 is a binding site for substrate; the sequence is NT. Residues G217, 243-244, and 265-266 contribute to the FMN site; these read GG and GT.

It belongs to the dihydroorotate dehydrogenase family. Type 1 subfamily. Heterotetramer of 2 PyrK and 2 PyrD type B subunits. FMN is required as a cofactor.

The protein localises to the cytoplasm. It catalyses the reaction (S)-dihydroorotate + NAD(+) = orotate + NADH + H(+). The protein operates within pyrimidine metabolism; UMP biosynthesis via de novo pathway; orotate from (S)-dihydroorotate (NAD(+) route): step 1/1. Catalyzes the conversion of dihydroorotate to orotate with NAD(+) as electron acceptor. The polypeptide is Dihydroorotate dehydrogenase B (NAD(+)), catalytic subunit (pyrD) (Exiguobacterium sibiricum (strain DSM 17290 / CCUG 55495 / CIP 109462 / JCM 13490 / 255-15)).